A 147-amino-acid polypeptide reads, in one-letter code: Large ribosomal subunit protein uL15 (147 aa).

Positions 1 to 62 (MDLSNLRPAI…GQMPLQRRLP (62 aa)) are disordered. Gly residues-rich tracts occupy residues 21–31 (RGPGSGNGKTA) and 42–52 (SGGGVKPGFEG).

Belongs to the universal ribosomal protein uL15 family. As to quaternary structure, part of the 50S ribosomal subunit.

Its function is as follows. Binds to the 23S rRNA. This chain is Large ribosomal subunit protein uL15, found in Syntrophotalea carbinolica (strain DSM 2380 / NBRC 103641 / GraBd1) (Pelobacter carbinolicus).